The following is a 64-amino-acid chain: Anti-sigma-G factor Gin (64 aa).

C11, C14, C30, and C33 together coordinate Zn(2+).

As to quaternary structure, probably functions as a homodimer. Interacts with sigma-G factor, recognition occurs via the first 71 residues of sigma-G. The cofactor is Zn(2+).

In terms of biological role, an anti-sigma-G factor, prevents premature activation of sigma-G factor in the forespore; overexpression leads to 1000-fold reduction in spore formation, spore formation stops after engulfment. Overexpression also inhibits sigma-G transcription activation activity. When both Gin and sigma-G are expressed in E.coli Gin inhibits sigma-G, strongly suggesting Gin inhibits by direct physical interaction. The protein is Anti-sigma-G factor Gin of Bacillus subtilis (strain 168).